Consider the following 195-residue polypeptide: Glycerol-3-phosphate acyltransferase (195 aa).

5 helical membrane passes run 2 to 22 (LWIF…GLFI), 52 to 72 (YGVA…LMAY), 78 to 98 (WIFI…SIFM), 112 to 132 (VFLA…LAVI), and 145 to 165 (FAVA…VPLA).

The protein belongs to the PlsY family. Probably interacts with PlsX.

It localises to the cell inner membrane. It catalyses the reaction an acyl phosphate + sn-glycerol 3-phosphate = a 1-acyl-sn-glycero-3-phosphate + phosphate. It functions in the pathway lipid metabolism; phospholipid metabolism. Its function is as follows. Catalyzes the transfer of an acyl group from acyl-phosphate (acyl-PO(4)) to glycerol-3-phosphate (G3P) to form lysophosphatidic acid (LPA). This enzyme utilizes acyl-phosphate as fatty acyl donor, but not acyl-CoA or acyl-ACP. This chain is Glycerol-3-phosphate acyltransferase, found in Maridesulfovibrio salexigens (strain ATCC 14822 / DSM 2638 / NCIMB 8403 / VKM B-1763) (Desulfovibrio salexigens).